The primary structure comprises 72 residues: Tetrahydromethanopterin S-methyltransferase subunit G (72 aa).

A helical transmembrane segment spans residues 48–68; that stretch reads IGILYGGFIGLLLFLIYTVVS.

This sequence belongs to the MtrG family. In terms of assembly, the complex is composed of 8 subunits; MtrA, MtrB, MtrC, MtrD, MtrE, MtrF, MtrG and MtrH.

It is found in the cell membrane. It catalyses the reaction 5-methyl-5,6,7,8-tetrahydromethanopterin + coenzyme M + 2 Na(+)(in) = 5,6,7,8-tetrahydromethanopterin + methyl-coenzyme M + 2 Na(+)(out). It participates in one-carbon metabolism; methanogenesis from CO(2); methyl-coenzyme M from 5,10-methylene-5,6,7,8-tetrahydromethanopterin: step 2/2. Functionally, part of a complex that catalyzes the formation of methyl-coenzyme M and tetrahydromethanopterin from coenzyme M and methyl-tetrahydromethanopterin. This is an energy-conserving, sodium-ion translocating step. The chain is Tetrahydromethanopterin S-methyltransferase subunit G from Methanosarcina barkeri (strain Fusaro / DSM 804).